Reading from the N-terminus, the 445-residue chain is Squalene synthase (445 aa).

The next 2 membrane-spanning stretches (helical) occupy residues 291-311 and 405-425; these read STFT…DLVY and LIVC…IAYV.

It belongs to the phytoene/squalene synthase family. Requires Mg(2+) as cofactor.

The protein localises to the endoplasmic reticulum membrane. The catalysed reaction is 2 (2E,6E)-farnesyl diphosphate + NADPH + H(+) = squalene + 2 diphosphate + NADP(+). The enzyme catalyses 2 (2E,6E)-farnesyl diphosphate + NADH + H(+) = squalene + 2 diphosphate + NAD(+). The protein operates within terpene metabolism; lanosterol biosynthesis; lanosterol from farnesyl diphosphate: step 1/3. Catalyzes the condensation of 2 two farnesyl pyrophosphate moieties to form squalene. It is the first committed enzyme of the sterol biosynthesis pathway. Required for the biosynthesis of ergosterol. The chain is Squalene synthase (SQS1) from Yarrowia lipolytica (strain CLIB 122 / E 150) (Yeast).